A 621-amino-acid polypeptide reads, in one-letter code: (-)-beta-phellandrene synthase 1, chloroplastic (621 aa).

Residues 1 to 49 constitute a chloroplast transit peptide; it reads MALALVSVAPLVSMRRSLFSSPYELKSIDKTIPNLVMCRKRMSGTPSIR. Mg(2+)-binding residues include aspartate 372, aspartate 376, and aspartate 524. The DDXXD motif signature appears at 372 to 376; that stretch reads DDIYD.

Belongs to the terpene synthase family. Tpsd subfamily. Requires Mg(2+) as cofactor. Mn(2+) serves as cofactor.

Its subcellular location is the plastid. It localises to the chloroplast. The enzyme catalyses (2E)-geranyl diphosphate = (-)-beta-phellandrene + diphosphate. Its pathway is terpene metabolism; oleoresin biosynthesis. The protein operates within secondary metabolite biosynthesis; terpenoid biosynthesis. Functionally, monoterpene synthase (TPS) involved in the biosynthesis of monoterpene natural products included in conifer oleoresin secretions and volatile emissions; these compounds contribute to biotic and abiotic stress defense against herbivores and pathogens. Catalyzes the conversion of (2E)-geranyl diphosphate (GPP) to (-)-beta-phellandrene and, to a lower extent, to (-)-alpha-phellandrene. The polypeptide is (-)-beta-phellandrene synthase 1, chloroplastic (Pinus contorta (Shore pine)).